The sequence spans 437 residues: UDP-N-acetylmuramate--L-alanine ligase (437 aa).

An ATP-binding site is contributed by 108–114 (GAHGKTS).

The protein belongs to the MurCDEF family.

The protein localises to the cytoplasm. The enzyme catalyses UDP-N-acetyl-alpha-D-muramate + L-alanine + ATP = UDP-N-acetyl-alpha-D-muramoyl-L-alanine + ADP + phosphate + H(+). It functions in the pathway cell wall biogenesis; peptidoglycan biosynthesis. In terms of biological role, cell wall formation. The chain is UDP-N-acetylmuramate--L-alanine ligase from Lysinibacillus sphaericus (strain C3-41).